Reading from the N-terminus, the 1217-residue chain is MTIPEKPQGVIWTDAQWQSIYATGQDVLVAAAAGSGKTAVLVERIIQKILRDGIDVDRLLVVTFTNLSAREMKHRVDQRIQEASIADPANAHLKNQRIKIHQAQISTLHSFCLKLIQQHYDVLNIDPNFRTSSEAENILLLEQTIDEVIEQHYDILDPAFIELTEQLSSDRSDDQFRMIIKQLYFFSVANPNPTNWLDQLVTPYEEEAQQAQLIQLLTDLSKVFITAAYDALNKAYDLFSMMDGVDKHLAVIEDERRLMGRVLEGGFIDIPYLTDHEFGARLPNVTAKIKEANEMMVDALEDAKLQYKKYKSLIDKVKNDYFSREADDLKADMQQLAPRVKYLARIVKDVMSEFNRKKRSKNILDFSDYEHFALQILTNEDGSPSEIAESYRQHFQEILVDEYQDTNRVQEKILSCIKTGDEHNGNLFMVGDVKQSIYKFRQADPSLFIEKYQRFTIDGDGTGRRIDLSQNFRSRKEVLSTTNYIFKHMMDEQVGEVKYDEAAQLYYGAPYDESDHPVNLKVLVEADQEHSDLTGSEQEAHFIVEQVKDILEHQKVYDMKTGSYRSATYKDIVILERSFGQARNLQQAFKNEDIPFHVNSREGYFEQTEVRLVLSFLRAIDNPLQDIYLVGLMRSVIYQFKEDELAQIRILSPNDDYFYQSIVNYINDEAADAILVDKLKMFLSDIQSYQQYSKDHPVYQLIDKFYNDHYVIQYFSGLIGGRGRRANLYGLFNKAIEFENSSFRGLYQFIRFIDELIERGKDFGEENVVGPNDNVVRMMTIHSSKGLEFPFVIYSGLSKDFNKRDLKQPVILNQQFGLGMDYFDVDKEMAFPSLASVAYKAVAEKELVSEEMRLVYVALTRAKEQLYLIGRVKNDKSLLELEQLSISGEHIAVNERLTSPNPFHLIYSILSKHQSASIPDDLKFEKDIAQVEDSSRPNVNISIIYFEDVSTETILDNNEYRSVNQLETMQNGNEDVKAQIKHQLDYQYPYVNDTKKPSKQSVSELKRQYETEESGTSYERVRQYRIGFSTYERPKFLSEQGKRKANEIGTLMHTVMQHLPFKKERISEVELHQYIDGLIDKHIIEADAKKDIRMDEIMTFINSELYSIIAEAEQVYRELPFVVNQALVDQLPQGDEDVSIIQGMIDLIFVKDGVHYFVDYKTDAFNRRRGMTDEEIGTQLKNKYKIQMKYYQNTLQTILNKEVKGYLYFFKFGTLQL.

Residues 10 to 475 (VIWTDAQWQS…IDLSQNFRSR (466 aa)) enclose the UvrD-like helicase ATP-binding domain. 31-38 (AAAGSGKT) contributes to the ATP binding site. A UvrD-like helicase C-terminal domain is found at 476-786 (KEVLSTTNYI…RMMTIHSSKG (311 aa)).

It belongs to the helicase family. AddA subfamily. As to quaternary structure, heterodimer of AddA and AddB/RexB. Mg(2+) is required as a cofactor.

The enzyme catalyses Couples ATP hydrolysis with the unwinding of duplex DNA by translocating in the 3'-5' direction.. It catalyses the reaction ATP + H2O = ADP + phosphate + H(+). Its function is as follows. The heterodimer acts as both an ATP-dependent DNA helicase and an ATP-dependent, dual-direction single-stranded exonuclease. Recognizes the chi site generating a DNA molecule suitable for the initiation of homologous recombination. The AddA nuclease domain is required for chi fragment generation; this subunit has the helicase and 3' -&gt; 5' nuclease activities. The chain is ATP-dependent helicase/nuclease subunit A from Staphylococcus aureus (strain Mu3 / ATCC 700698).